Reading from the N-terminus, the 152-residue chain is Large ribosomal subunit protein bL9 (152 aa).

The protein belongs to the bacterial ribosomal protein bL9 family.

Its function is as follows. Binds to the 23S rRNA. In Picosynechococcus sp. (strain ATCC 27264 / PCC 7002 / PR-6) (Agmenellum quadruplicatum), this protein is Large ribosomal subunit protein bL9.